The following is an 855-amino-acid chain: Sucrose synthase 7 (855 aa).

A GT-B glycosyltransferase region spans residues 279–758 (SIFNIVIFSI…GLQRIYECYT (480 aa)).

Belongs to the glycosyltransferase 1 family. Plant sucrose synthase subfamily. Predominantly expressed in roots, flowers and immature seeds.

It localises to the cytoplasm. The protein resides in the membrane. The catalysed reaction is an NDP-alpha-D-glucose + D-fructose = a ribonucleoside 5'-diphosphate + sucrose + H(+). Functionally, sucrose-cleaving enzyme that provides UDP-glucose and fructose for various metabolic pathways. The sequence is that of Sucrose synthase 7 (SUS7) from Oryza sativa subsp. japonica (Rice).